The following is a 255-amino-acid chain: Acetylglutamate kinase (255 aa).

Residues 40–41 (GG), R62, and N153 contribute to the substrate site.

It belongs to the acetylglutamate kinase family. ArgB subfamily.

The protein resides in the cytoplasm. It carries out the reaction N-acetyl-L-glutamate + ATP = N-acetyl-L-glutamyl 5-phosphate + ADP. Its pathway is amino-acid biosynthesis; L-arginine biosynthesis; N(2)-acetyl-L-ornithine from L-glutamate: step 2/4. Its function is as follows. Catalyzes the ATP-dependent phosphorylation of N-acetyl-L-glutamate. The chain is Acetylglutamate kinase from Bacillus cereus (strain G9842).